Reading from the N-terminus, the 88-residue chain is Small ribosomal subunit protein uS15 (88 aa).

This sequence belongs to the universal ribosomal protein uS15 family. As to quaternary structure, part of the 30S ribosomal subunit. Forms a bridge to the 50S subunit in the 70S ribosome, contacting the 23S rRNA.

Functionally, one of the primary rRNA binding proteins, it binds directly to 16S rRNA where it helps nucleate assembly of the platform of the 30S subunit by binding and bridging several RNA helices of the 16S rRNA. In terms of biological role, forms an intersubunit bridge (bridge B4) with the 23S rRNA of the 50S subunit in the ribosome. In Caldanaerobacter subterraneus subsp. tengcongensis (strain DSM 15242 / JCM 11007 / NBRC 100824 / MB4) (Thermoanaerobacter tengcongensis), this protein is Small ribosomal subunit protein uS15.